Reading from the N-terminus, the 555-residue chain is Glucose-6-phosphate isomerase (555 aa).

The Proton donor role is filled by Glu365. Active-site residues include His396 and Lys522.

Belongs to the GPI family.

It is found in the cytoplasm. It catalyses the reaction alpha-D-glucose 6-phosphate = beta-D-fructose 6-phosphate. The protein operates within carbohydrate biosynthesis; gluconeogenesis. It participates in carbohydrate degradation; glycolysis; D-glyceraldehyde 3-phosphate and glycerone phosphate from D-glucose: step 2/4. Catalyzes the reversible isomerization of glucose-6-phosphate to fructose-6-phosphate. The chain is Glucose-6-phosphate isomerase from Psychrobacter cryohalolentis (strain ATCC BAA-1226 / DSM 17306 / VKM B-2378 / K5).